The sequence spans 347 residues: Transcription factor JunD (347 aa).

Residues 1 to 46 (METPFYGDEALSGLGGGGSSSGGGGSFASPGRLFPGAPPTAAPGSM) are disordered. Over residues 13–26 (GLGGGGSSSGGGGS) the composition is skewed to gly residues. Residues 29–41 (SPGRLFPGAPPTA) carry the Menin-binding motif (MBM) motif. The MAP kinase docking motif; essential for its phosphorylation signature appears at 48-57 (KKDALTLSLS). Residues 63-91 (ALKPAAAPPPGPLRTDGAPGTAPPDGLLA) form a disordered region. Residue Ser-92 is modified to Phosphoserine. At Ser-102 the chain carries Phosphoserine; by MAPK8. Thr-119 is subject to Phosphothreonine. Disordered stretches follow at residues 164-183 (AAAGGPSGTAAGAAPPSELA) and 218-264 (EPVP…IDMD). Residues 220–231 (VPFPPPPPPGTL) are compositionally biased toward pro residues. Residues Ser-251, Ser-255, and Ser-259 each carry the phosphoserine modification. Residues 268-295 (RIKAERKRLRNRIAASKCRKRKLERISR) are basic motif. Residues 268–331 (RIKAERKRLR…AQLKQKVLSH (64 aa)) enclose the bZIP domain. The leucine-zipper stretch occupies residues 296–324 (LEEKVKTLKSQNTELASTASLLREQVAQL).

It belongs to the bZIP family. Jun subfamily. Heterodimer; binds DNA as a heterodimer. Component of an AP-1 transcription factor complex composed of JUN-FOS heterodimers. As part of the AP-1 transcription factor complex, forms heterodimers with FOS proteins, thereby binding to the AP-1 consensus sequence and stimulating transcription. Forms heterodimers with FOSB; thereby binding to the AP-1 consensus sequence. Interacts (via MBM motif) with MEN1; this interaction represses transcriptional activation. Interacts with MAPK10; this interaction is inhibited in the presence of MEN1. Post-translationally, phosphorylated by MAP kinases MAPK8 and MAPK10; phosphorylation is inhibited in the presence of MEN1.

The protein localises to the nucleus. Transcription factor binding AP-1 sites. Heterodimerizes with proteins of the FOS family to form an AP-1 transcription factor complex, thereby enhancing their DNA binding activity to an AP-1 consensus sequence 3'-TGA[GC]TCA-5' and enhancing their transcriptional activity. The polypeptide is Transcription factor JunD (JUND) (Bos taurus (Bovine)).